Reading from the N-terminus, the 154-residue chain is MTSILVLNGPNLNLLGTREPAVYGHETLADVERLCREEGERLGHAVACRQSNHEGQLIDWIHEAGRACVRGELLGIVLNAGALTHTSLALHDAIKGASVPVIEYHISNVHAREPFRHHSWIAPAARAVMAGLGVAGYALALRALVLVAPPRQAA.

The active-site Proton acceptor is Tyr23. Substrate contacts are provided by Asn79, His85, and Asp92. Residue His105 is the Proton donor of the active site. Residues 106-107 (IS) and Arg116 contribute to the substrate site.

The protein belongs to the type-II 3-dehydroquinase family. As to quaternary structure, homododecamer.

The enzyme catalyses 3-dehydroquinate = 3-dehydroshikimate + H2O. Its pathway is metabolic intermediate biosynthesis; chorismate biosynthesis; chorismate from D-erythrose 4-phosphate and phosphoenolpyruvate: step 3/7. Catalyzes a trans-dehydration via an enolate intermediate. The sequence is that of 3-dehydroquinate dehydratase 2 (aroQ2) from Ralstonia nicotianae (strain ATCC BAA-1114 / GMI1000) (Ralstonia solanacearum).